The sequence spans 1288 residues: Structural maintenance of chromosomes protein 4 (1288 aa).

A compositionally biased stretch (polar residues) spans 1 to 10 (MPRKGTQPST). The disordered stretch occupies residues 1 to 55 (MPRKGTQPSTARRREEGPPPPSPDGASSDAEPEPPSGRTESPATAAETASEELDN). A phosphoserine mark is found at Ser22 and Ser28. Thr39 carries the post-translational modification Phosphothreonine. The span at 39–48 (TESPATAAET) shows a compositional bias: low complexity. A phosphoserine mark is found at Ser41 and Ser50. 113–120 (GPNGSGKS) provides a ligand contact to ATP. Phosphoserine is present on Ser143. Residues 272-588 (RRVEILNEHR…LFQKVEEAKS (317 aa)) adopt a coiled-coil conformation. 2 positions are modified to N6-acetyllysine: Lys381 and Lys679. In terms of domain architecture, SMC hinge spans 613–727 (PGIYGRLGDL…ADNLDQATRV (115 aa)). The stretch at 767–1020 (LVIEISEEEV…ALSIKLKLEQ (254 aa)) forms a coiled coil. 2 positions are modified to phosphoserine: Ser982 and Ser1056. The stretch at 1109-1129 (ELDKITYERDSFRQAYEDLRK) forms a coiled coil.

The protein belongs to the SMC family. SMC4 subfamily. In terms of assembly, forms a heterodimer with SMC2. Component of the condensin complex, which contains the SMC2 and SMC4 heterodimer, and three non SMC subunits that probably regulate the complex: BRRN1/CAPH, CNAP1/CAPD2 and CAPG. In terms of tissue distribution, widely expressed. Higher expression in testis, colon, thymus.

The protein localises to the nucleus. Its subcellular location is the cytoplasm. It localises to the chromosome. Functionally, central component of the condensin complex, a complex required for conversion of interphase chromatin into mitotic-like condense chromosomes. The condensin complex probably introduces positive supercoils into relaxed DNA in the presence of type I topoisomerases and converts nicked DNA into positive knotted forms in the presence of type II topoisomerases. This Homo sapiens (Human) protein is Structural maintenance of chromosomes protein 4 (SMC4).